The primary structure comprises 210 residues: Scoloptoxin SSD558 (210 aa).

Residues Met-1–Gly-23 form the signal peptide.

In terms of processing, contains 3 disulfide bonds. Expressed by the venom gland.

It localises to the secreted. This Scolopendra dehaani (Thai centipede) protein is Scoloptoxin SSD558.